The chain runs to 193 residues: dCTP deaminase, dUMP-forming (193 aa).

Residues 107-112 (RSSLGR), Asp-125, 133-135 (TLE), Gln-154, and Tyr-168 each bind dCTP. The Proton donor/acceptor role is filled by Glu-135. Residues 169–193 (AESSGKYHGDERPSPSKMHLDFCRG) are disordered. Basic and acidic residues predominate over residues 173-193 (GKYHGDERPSPSKMHLDFCRG).

It belongs to the dCTP deaminase family. In terms of assembly, homotrimer.

The enzyme catalyses dCTP + 2 H2O = dUMP + NH4(+) + diphosphate. Its pathway is pyrimidine metabolism; dUMP biosynthesis; dUMP from dCTP: step 1/1. Functionally, bifunctional enzyme that catalyzes both the deamination of dCTP to dUTP and the hydrolysis of dUTP to dUMP without releasing the toxic dUTP intermediate. The polypeptide is dCTP deaminase, dUMP-forming (Methanopyrus kandleri (strain AV19 / DSM 6324 / JCM 9639 / NBRC 100938)).